The primary structure comprises 1691 residues: ADAMTS-like protein 3 (1691 aa).

Positions 1–26 (MASWTSPWWVLIGMVFMHSPLPQTTA) are cleaved as a signal peptide. Residues 75 to 124 (DGNWDAWGDWSDCSRTCGGGASYSLRRCLTGRNCEGQNIRYKTCSNHDCP) enclose the TSP type-1 1 domain. Disulfide bonds link Cys87-Cys118, Cys91-Cys123, and Cys102-Cys108. Asn293 carries N-linked (GlcNAc...) asparagine glycosylation. TSP type-1 domains lie at 418-468 (PLPR…APKP), 478-535 (DCPK…IPCY), and 564-626 (EEPT…EACD). 3 disulfide bridges follow: Cys576–Cys620, Cys580–Cys625, and Cys591–Cys609. A glycan (N-linked (GlcNAc...) asparagine) is linked at Asn681. 3 TSP type-1 domains span residues 703 to 760 (CPPR…FDCP), 763 to 818 (WHIE…ARTD), and 819 to 881 (CPPH…PECS). Residue Asn797 is glycosylated (N-linked (GlcNAc...) asparagine). Intrachain disulfides connect Cys831–Cys875, Cys835–Cys880, and Cys846–Cys863. One can recognise an Ig-like C2-type 1 domain in the interval 896–992 (PQILSVQRVY…IAGSAQETVV (97 aa)). Residues Asn915 and Asn927 are each glycosylated (N-linked (GlcNAc...) asparagine). Cys934 and Cys982 are oxidised to a cystine. Asn1102 is a glycosylation site (N-linked (GlcNAc...) asparagine). Residues 1146 to 1184 (PPAAQLRGETGSVSQSSHAKNSGKLTFKPKGPVLMRQSQ) are disordered. Residues 1156 to 1169 (GSVSQSSHAKNSGK) are compositionally biased toward polar residues. Positions 1185–1279 (PPSISFNKTI…GSDVESSSVL (95 aa)) constitute an Ig-like C2-type 2 domain. A glycan (N-linked (GlcNAc...) asparagine) is linked at Asn1191. The cysteines at positions 1215 and 1263 are disulfide-linked. Asn1292, Asn1316, Asn1330, Asn1343, Asn1349, Asn1356, Asn1432, Asn1516, Asn1574, and Asn1591 each carry an N-linked (GlcNAc...) asparagine glycan. Residues 1296–1378 (PEHNHLSVVV…ATNALGKAVA (83 aa)) form the Ig-like C2-type 3 domain. Residues Cys1321 and Cys1367 are joined by a disulfide bond. 2 consecutive TSP type-1 domains span residues 1424–1482 (QEPF…NIRD) and 1483–1545 (CPAR…HPCV). In terms of domain architecture, TSP type-1 10 spans 1597 to 1644 (CDVCWHTGPWKPCTAACGRGFQSRKVDCIHTRSCKPVAKRHCVQKKKP). The 37-residue stretch at 1655–1691 (CDRDCTDTTHYCMFVKHLNLCSLDRYKQRCCQSCQEG) folds into the PLAC domain.

Post-translationally, glycosylated. Can be O-fucosylated by POFUT2 on a serine or a threonine residue found within the consensus sequence C1-X(2)-(S/T)-C2-G of the TSP type-1 repeat domains where C1 and C2 are the first and second cysteine residue of the repeat, respectively. Fucosylated repeats can then be further glycosylated by the addition of a beta-1,3-glucose residue by the glucosyltransferase, B3GALTL. Fucosylation mediates the efficient secretion of ADAMTS family members. Can also be C-glycosylated with one or two mannose molecules on tryptophan residues within the consensus sequence W-X-X-W of the TPRs, and N-glycosylated. These other glycosylations can also facilitate secretion. In terms of tissue distribution, expressed in epithelial cells of the colon, fallopian tube, skin, breast, prostate, epididymis, liver, pancreatic islets and bile ducts, as well as by vascular endothelial cells, smooth muscle cells, fibroblasts, cortical and ganglionic neurons and cardiac myocytes. Also expressed by malignant epithelial cells in colon cancer, as well as breast, prostate, renal and skin tumors. Expression is significantly reduced in colon cancer compared to normal colon.

It is found in the secreted. It localises to the extracellular space. Its subcellular location is the extracellular matrix. This is ADAMTS-like protein 3 (ADAMTSL3) from Homo sapiens (Human).